The primary structure comprises 765 residues: MNLPEYHRLAAYITSDHSQDYTQDTNVAFIEEGPWDGEEEELITSFSTVEDLYTAICVREDNNQLDMALKFAPFASEIELPFYTALSQLKIDHDKLDDSARPVLGLYEPRATQSPDQSSRMRVLGNALSSNEVPSGHIRAEGKIKNVNTIEDFKNMDKQAMLQTSAKQIWDAINDGTIYSIPSLLSSFTILSFANLKKYTFTYWFAFPALHSEPAWRKVEQPPKFSAEETTALTEELGTWRYSHDNREHGFFLAKRVYPSSEHPQDPESESTSDLPFKWVIGSLREFESGFFNGVDAKNQYVSFVDPSTYHENPGWMLRNLLVLVRRRYKLDKVQILCYRDNHAKRHVPQSLILILESIYDPEYQSTAPDQIPKVTGWERNSLGKLTAKVTNLAQYMDPAQLADQAVDLNLKLMKWRIAPELNLDAIKNTKCLLLGAGTLGTYVSRLLMGWGVRKITFVDNASVSFSNPVRQPLFDFKDCIDGGAKKAYRASEALQEIYPGVDSTGHVMAVPMLGHPITDEAATKMNFELLQKLIEDHDAIFLLMDTRESRWLPTVMGKAAGKIVMNAALGFDTYVVMRHGVTPEDGGPAALGCYFCNDVVAPSDSVKDQTLDQQCTVTRPGVAPEASSKLVELLASVLQHPLKGAAPAPKLSSNHQSGQLEFDRDPPNHPLGLVPHQIRGFLAAYKTMLISGPSYDCCSACSPKIVNAYKEDGWEFIKRALTEKDYITELSGLAEVQRKAEAAANDVEWDSDEEGMEDEEPELL.

The GXGXXG motif motif lies at 436–441; that stretch reads GAGTLG. Residue Cys616 is the Glycyl thioester intermediate of the active site. Disordered regions lie at residues 646–670 and 744–765; these read AAPA…PPNH and AAND…PELL. Residues 721-760 form a homodimerization region; it reads ALTEKDYITELSGLAEVQRKAEAAANDVEWDSDEEGMEDE. The span at 748–765 shows a compositional bias: acidic residues; that stretch reads VEWDSDEEGMEDEEPELL.

The protein belongs to the ATG7 family. Homodimer. Interacts with ATG8 through a thioester bond between Cys-616 and the C-terminal Gly of ATG8 and with ATG12 through a thioester bond between Cys-616 and the C-terminal Gly of ATG12. Also interacts with ATG3.

Its subcellular location is the cytoplasm. It is found in the preautophagosomal structure. Its function is as follows. E1-like activating enzyme involved in the 2 ubiquitin-like systems required for cytoplasm to vacuole transport (Cvt) and autophagy. Activates ATG12 for its conjugation with ATG5 and ATG8 for its conjugation with phosphatidylethanolamine. Both systems are needed for the ATG8 association to Cvt vesicles and autophagosomes membranes. Autophagy is essential for maintenance of amino acid levels and protein synthesis under nitrogen starvation. Required for selective autophagic degradation of the nucleus (nucleophagy) as well as for mitophagy which contributes to regulate mitochondrial quantity and quality by eliminating the mitochondria to a basal level to fulfill cellular energy requirements and preventing excess ROS production. Required for normal mycelial growth and conidiogenesis, and regulates sclerotial formation. Plays an essential role in pathogenesis. In Botryotinia fuckeliana (strain BcDW1) (Noble rot fungus), this protein is Ubiquitin-like modifier-activating enzyme atg7.